The sequence spans 503 residues: Ent-kaurene oxidase-like 5 (503 aa).

Residues 8 to 28 (GAGGIGVAAAAAVVAATLAVV) form a helical membrane-spanning segment. Residue Cys-448 coordinates heme.

It belongs to the cytochrome P450 family. Heme is required as a cofactor. Expressed in roots.

Its subcellular location is the membrane. In terms of biological role, may hydroxylate diterpenes. In Oryza sativa subsp. japonica (Rice), this protein is Ent-kaurene oxidase-like 5.